Here is a 91-residue protein sequence, read N- to C-terminus: Ribonuclease P protein component 4 (91 aa).

Zn(2+)-binding residues include Cys55, Cys58, Cys78, and Cys81.

Belongs to the eukaryotic/archaeal RNase P protein component 4 family. Consists of a catalytic RNA component and at least 4-5 protein subunits. Requires Zn(2+) as cofactor.

The protein resides in the cytoplasm. The catalysed reaction is Endonucleolytic cleavage of RNA, removing 5'-extranucleotides from tRNA precursor.. Functionally, part of ribonuclease P, a protein complex that generates mature tRNA molecules by cleaving their 5'-ends. The protein is Ribonuclease P protein component 4 of Thermoplasma acidophilum (strain ATCC 25905 / DSM 1728 / JCM 9062 / NBRC 15155 / AMRC-C165).